A 227-amino-acid chain; its full sequence is Cytochrome c oxidase subunit 2 (227 aa).

Residues 1-14 (MAYPMQLGFQDATS) are Mitochondrial intermembrane-facing. The helical transmembrane segment at 15–45 (PIMEELLHFHDHTLMIVFLISSLVLYIISLM) threads the bilayer. Residues 46–59 (LTTKLTHTSTMDAQ) are Mitochondrial matrix-facing. The helical transmembrane segment at 60–87 (EVETVWTILPAIILIMIALPSLRILYMM) threads the bilayer. Over 88–227 (DEINNPSLTV…YFEKWSASML (140 aa)) the chain is Mitochondrial intermembrane. Cu cation contacts are provided by His-161, Cys-196, Glu-198, Cys-200, His-204, and Met-207. Glu-198 is a binding site for Mg(2+). Tyr-218 is subject to Phosphotyrosine.

This sequence belongs to the cytochrome c oxidase subunit 2 family. In terms of assembly, component of the cytochrome c oxidase (complex IV, CIV), a multisubunit enzyme composed of 14 subunits. The complex is composed of a catalytic core of 3 subunits MT-CO1, MT-CO2 and MT-CO3, encoded in the mitochondrial DNA, and 11 supernumerary subunits COX4I, COX5A, COX5B, COX6A, COX6B, COX6C, COX7A, COX7B, COX7C, COX8 and NDUFA4, which are encoded in the nuclear genome. The complex exists as a monomer or a dimer and forms supercomplexes (SCs) in the inner mitochondrial membrane with NADH-ubiquinone oxidoreductase (complex I, CI) and ubiquinol-cytochrome c oxidoreductase (cytochrome b-c1 complex, complex III, CIII), resulting in different assemblies (supercomplex SCI(1)III(2)IV(1) and megacomplex MCI(2)III(2)IV(2)). Found in a complex with TMEM177, COA6, COX18, COX20, SCO1 and SCO2. Interacts with TMEM177 in a COX20-dependent manner. Interacts with COX20. Interacts with COX16. The cofactor is Cu cation.

It localises to the mitochondrion inner membrane. The enzyme catalyses 4 Fe(II)-[cytochrome c] + O2 + 8 H(+)(in) = 4 Fe(III)-[cytochrome c] + 2 H2O + 4 H(+)(out). In terms of biological role, component of the cytochrome c oxidase, the last enzyme in the mitochondrial electron transport chain which drives oxidative phosphorylation. The respiratory chain contains 3 multisubunit complexes succinate dehydrogenase (complex II, CII), ubiquinol-cytochrome c oxidoreductase (cytochrome b-c1 complex, complex III, CIII) and cytochrome c oxidase (complex IV, CIV), that cooperate to transfer electrons derived from NADH and succinate to molecular oxygen, creating an electrochemical gradient over the inner membrane that drives transmembrane transport and the ATP synthase. Cytochrome c oxidase is the component of the respiratory chain that catalyzes the reduction of oxygen to water. Electrons originating from reduced cytochrome c in the intermembrane space (IMS) are transferred via the dinuclear copper A center (CU(A)) of subunit 2 and heme A of subunit 1 to the active site in subunit 1, a binuclear center (BNC) formed by heme A3 and copper B (CU(B)). The BNC reduces molecular oxygen to 2 water molecules using 4 electrons from cytochrome c in the IMS and 4 protons from the mitochondrial matrix. The polypeptide is Cytochrome c oxidase subunit 2 (MT-CO2) (Capra hircus (Goat)).